A 495-amino-acid chain; its full sequence is Mesoderm induction early response protein 1 (495 aa).

Disordered regions lie at residues 1 to 25 and 76 to 131; these read MAEPSLRTASPGGSAASDDHEFEPS and GSTV…PSFT. The span at 83–94 shows a compositional bias: acidic residues; that stretch reads GEEEEDEEDMDN. A compositionally biased stretch (polar residues) spans 120–130; that stretch reads QSSNDDPTPSF. The 99-residue stretch at 171 to 269 folds into the ELM2 domain; the sequence is KEIMVGSMFQ…EALRRLRFNV (99 aa). The SANT domain occupies 274–326; sequence EELSVWTEEECRNFEQGLKAYGKDFHLIQANKVRTRSVGECVAFYYMWKKSER. Disordered stretches follow at residues 356–397 and 416–495; these read DESE…NGVS and HLNG…HGEV. Polar residues-rich tracts occupy residues 387-397 and 420-440; these read TASNNTQNGVS and PTISSSDPSSNETDTNGYNRE. Positions 462 to 476 are enriched in basic and acidic residues; that stretch reads TNERPIKRQRMDSPG. Residues 477–489 are compositionally biased toward polar residues; sequence KESTGSSEFSQEV.

It is found in the nucleus. Functionally, transcriptional repressor regulating the expression of a number of genes. Probably functions through recruitment of histone deacetylases involved in chromatin silencing. This is Mesoderm induction early response protein 1 (mier1) from Xenopus laevis (African clawed frog).